The primary structure comprises 279 residues: Thioredoxin-like 1-1, chloroplastic (279 aa).

One can recognise a Thioredoxin domain in the interval 56 to 202 (ALTERKARPL…FKDALAKHGP (147 aa)). Active-site nucleophile residues include cysteine 125 and cysteine 128. Cysteines 125 and 128 form a disulfide.

The protein belongs to the thioredoxin family.

Functionally, probable thiol-disulfide oxidoreductase that may participate in various redox reactions. This chain is Thioredoxin-like 1-1, chloroplastic, found in Oryza sativa subsp. japonica (Rice).